The primary structure comprises 311 residues: MSYQDLKECKIITAFITPFHEDGSINFDAIPALIEHLLAHHTDGILLAGTTAESPTLTHDEELELFAAVQKVVNGRVPLIAGVGTNDTRDSIEFVKEVAEFGGFAAGLAIVPYYNKPSQEGMYQHFKTIADASDLPIIIYNIPGRVVVELTPETMLRLADHPNIIGVKECTSLANMAYLIEHKPEEFLIYTGEDGDAFHAMNLGADGVISVASHTNGDEMHEMFTAIAESDMKKAAAIQRKFIPKVNALFSYPSPAPVKAILNYMGFEAGPTRLPLVPAPEEDAKRIIKVVVDGDYEATKATVTGVLRPDY.

Threonine 51 contributes to the pyruvate binding site. Catalysis depends on tyrosine 140, which acts as the Proton donor/acceptor. The active-site Schiff-base intermediate with substrate is lysine 168. Isoleucine 209 is a pyruvate binding site.

It belongs to the DapA family. As to quaternary structure, homotetramer; dimer of dimers.

Its subcellular location is the cytoplasm. It catalyses the reaction L-aspartate 4-semialdehyde + pyruvate = (2S,4S)-4-hydroxy-2,3,4,5-tetrahydrodipicolinate + H2O + H(+). The protein operates within amino-acid biosynthesis; L-lysine biosynthesis via DAP pathway; (S)-tetrahydrodipicolinate from L-aspartate: step 3/4. Its function is as follows. Catalyzes the condensation of (S)-aspartate-beta-semialdehyde [(S)-ASA] and pyruvate to 4-hydroxy-tetrahydrodipicolinate (HTPA). The chain is 4-hydroxy-tetrahydrodipicolinate synthase from Streptococcus pneumoniae (strain 70585).